The primary structure comprises 239 residues: Orotidine 5'-phosphate decarboxylase (239 aa).

Residues aspartate 11, lysine 33, 60–69, threonine 117, arginine 178, glutamine 187, glycine 207, and arginine 208 each bind substrate; that span reads DLKFHDIPTT. The active-site Proton donor is lysine 62.

This sequence belongs to the OMP decarboxylase family. Type 1 subfamily. Homodimer.

The enzyme catalyses orotidine 5'-phosphate + H(+) = UMP + CO2. The protein operates within pyrimidine metabolism; UMP biosynthesis via de novo pathway; UMP from orotate: step 2/2. Catalyzes the decarboxylation of orotidine 5'-monophosphate (OMP) to uridine 5'-monophosphate (UMP). The sequence is that of Orotidine 5'-phosphate decarboxylase from Nitrosospira multiformis (strain ATCC 25196 / NCIMB 11849 / C 71).